A 502-amino-acid chain; its full sequence is DGEQALQASLSVKEKLQIALCLEKAGVDIMEVGFPISSPGDFKSVQTISQNIKNSRICSLARCIEKDIDTAGEAMSHCDFFRIHVFLATSTLHMESKLRKNFDEIIDMAIFSVKRALRYTDDVEFSCEDASRTTMDNLCRIVEKLISCGVKTINIPDTVGYTIPNELSLIIKNLFERVPNIHKSTISVHCHNDLGMAVGNSISAIQAGARQIEGTINGIGERAGNTALEEVIMAIKVREDILGLSTNINHKEIYRTSQVISRICNMPIPSNKAIVGSNAFSHSSGIHQDGVLKNRENYEIMDPSSIGLKKVKLNLTSRSGRAAVKYYMNEMGYKDSDYNIDELYVDFLKLADKKGQVFDYDLEALAFINKKQDELEHFCLKFFSVQSISNNLSTASVTLLCGDKIYTESSTTSNGPVXAIYQALNRITHFPIILQKFQLIAKGQGKDALGQVDILVKYKKRQFHGVGLATDIIESSAQAMINVLNNIWKVKQVNKNLKNLKK.

Mn(2+) contacts are provided by D1, H189, H191, and N225. Positions 1 to 254 (DGEQALQASL…STNINHKEIY (254 aa)) constitute a Pyruvate carboxyltransferase domain. Residues 379–502 (CLKFFSVQSI…VNKNLKNLKK (124 aa)) are regulatory domain.

It belongs to the alpha-IPM synthase/homocitrate synthase family. LeuA type 1 subfamily. As to quaternary structure, homodimer. Mn(2+) is required as a cofactor.

The protein localises to the cytoplasm. The catalysed reaction is 3-methyl-2-oxobutanoate + acetyl-CoA + H2O = (2S)-2-isopropylmalate + CoA + H(+). Its pathway is amino-acid biosynthesis; L-leucine biosynthesis; L-leucine from 3-methyl-2-oxobutanoate: step 1/4. Its function is as follows. Catalyzes the condensation of the acetyl group of acetyl-CoA with 3-methyl-2-oxobutanoate (2-ketoisovalerate) to form 3-carboxy-3-hydroxy-4-methylpentanoate (2-isopropylmalate). The polypeptide is 2-isopropylmalate synthase (Buchnera aphidicola subsp. Uroleucon sonchi).